We begin with the raw amino-acid sequence, 193 residues long: Transmembrane protein 066L (193 aa).

Helical transmembrane passes span 14 to 34 (VLFATLLVGSALVFPVGGLVW) and 48 to 68 (LVVEQHPHVGFALQLLALVVV).

Belongs to the IIV-6 357R family.

It is found in the membrane. The protein is Transmembrane protein 066L of Invertebrate iridescent virus 3 (IIV-3).